A 1161-amino-acid chain; its full sequence is DNA-directed RNA polymerase III subunit 2 (1161 aa).

The segment at 1104 to 1125 (CRACGLLGYYNYKLKKAVCTTC) adopts a C4-type zinc-finger fold.

This sequence belongs to the RNA polymerase beta chain family. In terms of assembly, component of the RNA polymerase III (Pol III) complex consisting of 17 subunits.

It localises to the nucleus. It carries out the reaction RNA(n) + a ribonucleoside 5'-triphosphate = RNA(n+1) + diphosphate. In terms of biological role, DNA-dependent RNA polymerase catalyzes the transcription of DNA into RNA using the four ribonucleoside triphosphates as substrates. Second largest core component of RNA polymerase III which synthesizes small RNAs, such as 5S rRNA and tRNAs. Proposed to contribute to the polymerase catalytic activity and forms the polymerase active center together with the largest subunit. Pol III is composed of mobile elements and NRPC2 is part of the core element with the central large cleft and probably a clamp element that moves to open and close the cleft. Its function is as follows. Essential for the completion of the three rounds of mitosis in female megaspores required for the development of mature gametophytes. The sequence is that of DNA-directed RNA polymerase III subunit 2 from Arabidopsis thaliana (Mouse-ear cress).